The following is a 539-amino-acid chain: Glycerophosphoinositol inositolphosphodiesterase GDPD2 (539 aa).

The Cytoplasmic portion of the chain corresponds to 1-40 (MADSPGCCSIWARCLHCLYSCHWRKYPKQKMQTSKCDCIW). Residues 41 to 61 (FGLLFLTFLLSLGWLYIGLIL) traverse the membrane as a helical segment. Residues 62–83 (LNDLHNFNEFLFRHWGHWMDWS) lie on the Extracellular side of the membrane. Residues 84-104 (LIVLLVVSLLVTYASLLLLLG) form a helical membrane-spanning segment. Topologically, residues 105–121 (LLLQLCGQPLHLHSLHK) are cytoplasmic. A helical transmembrane segment spans residues 122–142 (VLLLLIVLLVAAGLVGLDIQW). At 143–154 (RQEWHSLRLSLQ) the chain is on the extracellular side. Residues 155–175 (ATAPFLHIGAVAGITLLAWPV) traverse the membrane as a helical segment. Topologically, residues 176–189 (ADTFYRIHPRGPKV) are cytoplasmic. A helical membrane pass occupies residues 190-210 (LLLLLFFGVTLVIYLMPLLFI). The Extracellular segment spans residues 211 to 491 (SSPCIMKLRD…PLWLLPPQKY (281 aa)). The region spanning 225–480 (PGLVGHRGAP…NACQLLQQMQ (256 aa)) is the GP-PDE domain. A divalent metal cation is bound by residues glutamate 257, aspartate 259, and histidine 272. Residue asparagine 333 is glycosylated (N-linked (GlcNAc...) asparagine). Residues 492–512 (LMIWVITDCASILLLLSIFLL) form a helical membrane-spanning segment. Topologically, residues 513–539 (RGGCAKRNRTGLETAVLLTKINNFASE) are cytoplasmic.

This sequence belongs to the glycerophosphoryl diester phosphodiesterase family. Ca(2+) serves as cofactor. In terms of tissue distribution, detected in spleen, femur and calvaria.

It localises to the cell membrane. It is found in the cytoplasm. The protein resides in the cytoskeleton. It catalyses the reaction sn-glycero-3-phospho-1D-myo-inositol + H2O = 1D-myo-inositol 1-phosphate + glycerol + H(+). Its function is as follows. Has glycerophosphoinositol inositolphosphodiesterase activity and specifically hydrolyzes glycerophosphoinositol, with no activity for other substrates such as glycerophosphoinositol 4-phosphate, glycerophosphocholine, glycerophosphoethanolamine, and glycerophosphoserine. Accelerates the program of osteoblast differentiation and growth. May play a role in remodeling of the actin cytoskeleton. This is Glycerophosphoinositol inositolphosphodiesterase GDPD2 (Gdpd2) from Mus musculus (Mouse).